The chain runs to 409 residues: NADH-quinone oxidoreductase subunit D (409 aa).

It belongs to the complex I 49 kDa subunit family. As to quaternary structure, NDH-1 is composed of 14 different subunits. Subunits NuoB, C, D, E, F, and G constitute the peripheral sector of the complex.

It is found in the cell inner membrane. The enzyme catalyses a quinone + NADH + 5 H(+)(in) = a quinol + NAD(+) + 4 H(+)(out). NDH-1 shuttles electrons from NADH, via FMN and iron-sulfur (Fe-S) centers, to quinones in the respiratory chain. The immediate electron acceptor for the enzyme in this species is believed to be ubiquinone. Couples the redox reaction to proton translocation (for every two electrons transferred, four hydrogen ions are translocated across the cytoplasmic membrane), and thus conserves the redox energy in a proton gradient. In Helicobacter pylori (strain Shi470), this protein is NADH-quinone oxidoreductase subunit D.